Consider the following 524-residue polypeptide: 2-isopropylmalate synthase (524 aa).

The Pyruvate carboxyltransferase domain occupies 12-274; the sequence is VIIFDTTLRD…WNRIETTMLT (263 aa). Mn(2+)-binding residues include aspartate 21, histidine 209, histidine 211, and asparagine 245. A regulatory domain region spans residues 398–524; sequence KLMSLTVIAG…EDAPAVAVAG (127 aa).

The protein belongs to the alpha-IPM synthase/homocitrate synthase family. LeuA type 1 subfamily. Homodimer. The cofactor is Mn(2+).

Its subcellular location is the cytoplasm. It carries out the reaction 3-methyl-2-oxobutanoate + acetyl-CoA + H2O = (2S)-2-isopropylmalate + CoA + H(+). The protein operates within amino-acid biosynthesis; L-leucine biosynthesis; L-leucine from 3-methyl-2-oxobutanoate: step 1/4. Its function is as follows. Catalyzes the condensation of the acetyl group of acetyl-CoA with 3-methyl-2-oxobutanoate (2-ketoisovalerate) to form 3-carboxy-3-hydroxy-4-methylpentanoate (2-isopropylmalate). The protein is 2-isopropylmalate synthase of Rhodopseudomonas palustris (strain ATCC BAA-98 / CGA009).